The sequence spans 233 residues: Small ribosomal subunit protein uS7m (233 aa).

A mitochondrion-targeting transit peptide spans 1 to 28; sequence MAAPTGKLLVHRIRAGLTCLTQVRWSRY.

The protein belongs to the universal ribosomal protein uS7 family. As to quaternary structure, component of the mitochondrial ribosome small subunit (28S) which comprises a 12S rRNA and about 30 distinct proteins.

It localises to the mitochondrion. This Xenopus laevis (African clawed frog) protein is Small ribosomal subunit protein uS7m (mrps7).